The sequence spans 183 residues: Nucleoside triphosphate pyrophosphatase (183 aa).

The active-site Proton acceptor is the aspartate 71.

The protein belongs to the Maf family. The cofactor is a divalent metal cation.

It is found in the cytoplasm. It carries out the reaction a ribonucleoside 5'-triphosphate + H2O = a ribonucleoside 5'-phosphate + diphosphate + H(+). It catalyses the reaction a 2'-deoxyribonucleoside 5'-triphosphate + H2O = a 2'-deoxyribonucleoside 5'-phosphate + diphosphate + H(+). Its function is as follows. Nucleoside triphosphate pyrophosphatase. May have a dual role in cell division arrest and in preventing the incorporation of modified nucleotides into cellular nucleic acids. The sequence is that of Nucleoside triphosphate pyrophosphatase from Campylobacter jejuni subsp. jejuni serotype O:2 (strain ATCC 700819 / NCTC 11168).